The primary structure comprises 329 residues: MYG1 protein (329 aa).

It belongs to the MYG1 family.

This chain is MYG1 protein, found in Dictyostelium discoideum (Social amoeba).